A 323-amino-acid polypeptide reads, in one-letter code: Biotin synthase (323 aa).

Residues 46-264 (TEIQLSSLLS…IAVARITMPR (219 aa)) enclose the Radical SAM core domain. 3 residues coordinate [4Fe-4S] cluster: cysteine 61, cysteine 65, and cysteine 68. Positions 105, 136, 196, and 268 each coordinate [2Fe-2S] cluster.

Belongs to the radical SAM superfamily. Biotin synthase family. Homodimer. The cofactor is [4Fe-4S] cluster. [2Fe-2S] cluster serves as cofactor.

It carries out the reaction (4R,5S)-dethiobiotin + (sulfur carrier)-SH + 2 reduced [2Fe-2S]-[ferredoxin] + 2 S-adenosyl-L-methionine = (sulfur carrier)-H + biotin + 2 5'-deoxyadenosine + 2 L-methionine + 2 oxidized [2Fe-2S]-[ferredoxin]. Its pathway is cofactor biosynthesis; biotin biosynthesis; biotin from 7,8-diaminononanoate: step 2/2. In terms of biological role, catalyzes the conversion of dethiobiotin (DTB) to biotin by the insertion of a sulfur atom into dethiobiotin via a radical-based mechanism. The polypeptide is Biotin synthase (Bordetella avium (strain 197N)).